Reading from the N-terminus, the 201-residue chain is Small ribosomal subunit protein uS4c (201 aa).

An S4 RNA-binding domain is found at 89 to 149 (MRLDNILFRL…DEQKSRALIQ (61 aa)).

This sequence belongs to the universal ribosomal protein uS4 family. In terms of assembly, part of the 30S ribosomal subunit. Contacts protein S5. The interaction surface between S4 and S5 is involved in control of translational fidelity.

Its subcellular location is the plastid. It is found in the chloroplast. One of the primary rRNA binding proteins, it binds directly to 16S rRNA where it nucleates assembly of the body of the 30S subunit. In terms of biological role, with S5 and S12 plays an important role in translational accuracy. In Coffea arabica (Arabian coffee), this protein is Small ribosomal subunit protein uS4c (rps4).